The chain runs to 588 residues: Myc box-dependent-interacting protein 1 (588 aa).

Ala2 bears the N-acetylalanine mark. Residues 2 to 122 (AEMGSKGVTA…DYHQKLVDQA (121 aa)) form an interaction with BIN2 region. 2 coiled-coil regions span residues 15–42 (ASNV…TKDE) and 193–274 (HLVA…EKQH). In terms of domain architecture, BAR spans 29–276 (VLQKLGKADE…LVSLEKQHGS (248 aa)). The tract at residues 279–355 (FTVKAQPSDN…PKHTPSKEMK (77 aa)) is disordered. A phosphoserine mark is found at Ser296, Ser298, and Ser304. Phosphothreonine is present on Thr308. Ser324 and Ser332 each carry phosphoserine. The tract at residues 379–422 (FEAPGPFSEQASLLDLDFEPLPPVASPVKAPTPSGQSIPWDLWE) is clathrin-binding. Positions 448-484 (PSQTAEPGPAQPAEASEVVGGAQEPGETAASEATSSS) are disordered. Residues 474-484 (ETAASEATSSS) are compositionally biased toward low complexity. In terms of domain architecture, SH3 spans 515 to 588 (GFMFKVQAQH…FPENFTERVQ (74 aa)).

Heterodimer with AMPH. Binds SH3GLB1. Interacts (via SH3 domain) with DNM1. Interacts with SYNJ1. Interacts (via SH3 domain) with DNM2. Interacts with CLTC. Interacts with AP2A2. Interacts with AP2B1. Interacts with MYC (via N-terminal transactivation domain); the interaction requires the integrity of the conserved MYC box regions 1 and 2. Interacts with BIN2. Interacts with SNX4. Interacts (via BAR domain) with BACE1. Binds (via BAR domain) F-actin. Phosphorylated by protein kinase C. Isoform 1 is expressed mainly in the brain. Isoform 2 is widely expressed.

It is found in the nucleus. The protein resides in the cytoplasm. It localises to the endosome. The protein localises to the cell membrane. Its subcellular location is the sarcolemma. It is found in the T-tubule. Is a key player in the control of plasma membrane curvature, and membrane shaping and remodeling. Required in muscle cells for the formation of T-tubules, tubular invaginations of the plasma membrane that function in depolarization-contraction coupling. Required in muscle cells for the formation of T-tubules, tubular invaginations of the plasma membrane that function in depolarization-contraction coupling. Is a negative regulator of endocytosis. Is also involved in the regulation of intracellular vesicles sorting, modulation of BACE1 trafficking and the control of amyloid-beta production. In neuronal circuits, endocytosis regulation may influence the internalization of PHF-tau aggregates. May be involved in the regulation of MYC activity and the control cell proliferation. The sequence is that of Myc box-dependent-interacting protein 1 (Bin1) from Mus musculus (Mouse).